We begin with the raw amino-acid sequence, 213 residues long: mRNA-decapping protein OPG121 (213 aa).

N(7)-methyl-GTP is bound by residues Glu-16 and Arg-50. In terms of domain architecture, Nudix hydrolase spans 30–209; the sequence is KDTHVFAACI…EYLSYIYNML (180 aa). The Nudix box signature appears at 111-132; that stretch reads GKLDKKESIKDCLRRELKEESD. The Mg(2+) site is built by Glu-117, Glu-126, Glu-130, Asp-151, and Glu-183. Glu-126 acts as the Nucleophile in catalysis. Asp-151 is a binding site for N(7)-methyl-GTP.

This sequence belongs to the Nudix hydrolase family. It depends on Mg(2+) as a cofactor. Mn(2+) serves as cofactor.

It catalyses the reaction a 5'-end (N(7)-methyl 5'-triphosphoguanosine)-guanosine in mRNA + H2O = a 5'-end phospho-guanosine in mRNA + N(7)-methyl-GDP + 2 H(+). In terms of biological role, decapping enzyme that remove the protective 5'-cap from both host and viral mRNAs to commit transcripts for decay by the cellular exonuclease XRN1. Accelerates viral and cellular mRNA turnover to eliminate competing host mRNAs and allow stage-specific synthesis of viral proteins. Acceleration of the turnover of cellular transcripts may even promote the shutoff of host protein synthesis. This Homo sapiens (Human) protein is mRNA-decapping protein OPG121 (OPG121).